A 248-amino-acid polypeptide reads, in one-letter code: Ureidoacrylate amidohydrolase RutB (248 aa).

The Proton acceptor role is filled by Asp-41. Lys-150 is a catalytic residue. The active-site Nucleophile is the Cys-183.

The protein belongs to the isochorismatase family. RutB subfamily.

It carries out the reaction (Z)-3-ureidoacrylate + H2O + H(+) = (Z)-3-aminoacrylate + NH4(+) + CO2. It catalyses the reaction (Z)-3-ureidoacrylate + H2O = (Z)-3-aminoacrylate + carbamate + H(+). The enzyme catalyses (Z)-2-methylureidoacrylate + H2O + H(+) = (Z)-2-methylaminoacrylate + NH4(+) + CO2. In terms of biological role, hydrolyzes ureidoacrylate to form aminoacrylate and carbamate. The carbamate hydrolyzes spontaneously, thereby releasing one of the nitrogen atoms of the pyrimidine ring as ammonia and one of its carbon atoms as CO2. This Methylorubrum extorquens (strain DSM 6343 / CIP 106787 / DM4) (Methylobacterium extorquens) protein is Ureidoacrylate amidohydrolase RutB.